We begin with the raw amino-acid sequence, 318 residues long: Homeobox-leucine zipper protein ATHB-4 (318 aa).

Disordered regions lie at residues 1–23 and 128–165; these read MGER…KEPS and ARGG…RKKL. Low complexity predominate over residues 8 to 17; it reads LGLSLSLGNS. The segment covering 128–140 has biased composition (basic and acidic residues); that stretch reads ARGGDENEAERAS. The homeobox DNA-binding region spans 160 to 219; that stretch reads GSRKKLRLSKDQALVLEETFKEHSTLNPKQKLALAKQLNLRARQVEVWFQNRRARTKLKQ. The interval 227 to 248 is leucine-zipper; it reads LKRCCDNLTEENRRLQKEVSEL.

The protein belongs to the HD-ZIP homeobox family. Class II subfamily.

Its subcellular location is the nucleus. Probable transcription factor. This Arabidopsis thaliana (Mouse-ear cress) protein is Homeobox-leucine zipper protein ATHB-4 (ATHB-4).